We begin with the raw amino-acid sequence, 156 residues long: Small ribosomal subunit protein uS7 (156 aa).

It belongs to the universal ribosomal protein uS7 family. In terms of assembly, part of the 30S ribosomal subunit. Contacts proteins S9 and S11.

In terms of biological role, one of the primary rRNA binding proteins, it binds directly to 16S rRNA where it nucleates assembly of the head domain of the 30S subunit. Is located at the subunit interface close to the decoding center, probably blocks exit of the E-site tRNA. The protein is Small ribosomal subunit protein uS7 of Roseobacter denitrificans (strain ATCC 33942 / OCh 114) (Erythrobacter sp. (strain OCh 114)).